The sequence spans 431 residues: Interleukin-11 receptor subunit alpha (431 aa).

Residues 1 to 23 (MSSSRSGLTRVLVAVATALVSSS) form the signal peptide. Topologically, residues 24–371 (TPCPQAWGPP…DPLEQVAVLA (348 aa)) are extracellular. One can recognise an Ig-like C2-type domain in the interval 27–110 (PQAWGPPGVQ…FGGMVTLKLG (84 aa)). Cystine bridges form between cysteine 48/cysteine 94, cysteine 120/cysteine 130, and cysteine 170/cysteine 180. 2 consecutive Fibronectin type-III domains span residues 112–219 (PPAR…LRPD) and 220–317 (PPQG…TPST). Residue asparagine 127 is glycosylated (N-linked (GlcNAc...) asparagine). The tract at residues 151–170 (KTLPGAESQRESPSTGPWPC) is disordered. An N-linked (GlcNAc...) asparagine glycan is attached at asparagine 194. Residues 304 to 308 (WSAWS) carry the WSXWS motif motif. The tract at residues 310 to 360 (EAWGTPSTGPLRDEVPDGSRGHEQKLEAAAQEDSPAPPSPSLQPDPRPLDH) is disordered. The segment covering 320 to 335 (LRDEVPDGSRGHEQKL) has biased composition (basic and acidic residues). Over residues 344–355 (PAPPSPSLQPDP) the composition is skewed to pro residues. A helical membrane pass occupies residues 372 to 392 (SLGIFSFLGLAVGALALGLWL). Over 393 to 431 (RLRRSGKDGPQKPGFLAPMIPGDKLPGIPNLQRTPENFS) the chain is Cytoplasmic. The disordered stretch occupies residues 402-431 (PQKPGFLAPMIPGDKLPGIPNLQRTPENFS).

This sequence belongs to the type I cytokine receptor family. Type 3 subfamily. As to quaternary structure, on IL11 binding, forms a multimer complex with IL6ST/gp130. Post-translationally, a short soluble form is also released from the membrane by proteolysis. The sIL11RA is formed either by limited proteolysis of membrane-bound receptors, a process referred to as ectodomain shedding, or directly secreted from the cells after alternative mRNA splicing. mIL11RA is cleaved by the proteases ADAM10, ELANE and PRTN3.

It localises to the membrane. The protein localises to the secreted. In terms of biological role, receptor for interleukin-11 (IL11). The receptor systems for IL6, LIF, OSM, CNTF, IL11 and CT1 can utilize IL6ST for initiating signal transmission. The IL11/IL11RA/IL6ST complex may be involved in the control of proliferation and/or differentiation of skeletogenic progenitor or other mesenchymal cells. Essential for the normal development of craniofacial bones and teeth. Restricts suture fusion and tooth number. Soluble form of IL11 receptor (sIL11RA) that acts as an agonist of IL11 activity. The IL11:sIL11RA complex binds to IL6ST/gp130 on cell surfaces and induces signaling also on cells that do not express membrane-bound IL11RA in a process called IL11 trans-signaling. The polypeptide is Interleukin-11 receptor subunit alpha (Rattus norvegicus (Rat)).